The sequence spans 560 residues: Putative protease Do-like 11, mitochondrial (560 aa).

A mitochondrion-targeting transit peptide spans 1 to 65; it reads MFFRPCVHTV…RRSSTSAAER (65 aa). The serine protease stretch occupies residues 117-302; that stretch reads TEYSKSKPWK…ESRQYSCFGS (186 aa). Active-site charge relay system residues include His-150, Asp-184, and Ser-258. Residues 288–384 form the PDZ domain; the sequence is ITSVQESRQY…YLVSMKKPGE (97 aa).

Belongs to the peptidase S1C family.

It is found in the mitochondrion membrane. Functionally, putative serine protease. The chain is Putative protease Do-like 11, mitochondrial (DEGP11) from Arabidopsis thaliana (Mouse-ear cress).